Here is a 446-residue protein sequence, read N- to C-terminus: Chromosomal replication initiator protein DnaA (446 aa).

The interval 1 to 92 (MENISDLWNS…SQAEEEIDLP (92 aa)) is domain I, interacts with DnaA modulators. A disordered region spans residues 87 to 107 (EEIDLPPSKPNSAQDDSNHLP). The segment at 93–109 (PSKPNSAQDDSNHLPQS) is domain II. A compositionally biased stretch (polar residues) spans 96 to 107 (PNSAQDDSNHLP). Positions 110-326 (MLNPKYTFDT…GALIRVVAYS (217 aa)) are domain III, AAA+ region. The ATP site is built by Gly154, Gly156, Lys157, and Thr158. The segment at 327–446 (SLINKDINAD…QVEEINDILK (120 aa)) is domain IV, binds dsDNA.

It belongs to the DnaA family. As to quaternary structure, oligomerizes as a right-handed, spiral filament on DNA at oriC.

The protein localises to the cytoplasm. Its function is as follows. Plays an essential role in the initiation and regulation of chromosomal replication. ATP-DnaA binds to the origin of replication (oriC) to initiate formation of the DNA replication initiation complex once per cell cycle. Binds the DnaA box (a 9 base pair repeat at the origin) and separates the double-stranded (ds)DNA. Forms a right-handed helical filament on oriC DNA; dsDNA binds to the exterior of the filament while single-stranded (ss)DNA is stabiized in the filament's interior. The ATP-DnaA-oriC complex binds and stabilizes one strand of the AT-rich DNA unwinding element (DUE), permitting loading of DNA polymerase. After initiation quickly degrades to an ADP-DnaA complex that is not apt for DNA replication. Binds acidic phospholipids. The sequence is that of Chromosomal replication initiator protein DnaA from Bacillus cereus (strain ATCC 10987 / NRS 248).